Consider the following 195-residue polypeptide: Shikimate kinase (195 aa).

31–36 (GAGKSC) is an ATP binding site. Ser-35 provides a ligand contact to Mg(2+). Substrate contacts are provided by Asp-53, Arg-77, and Gly-99. Arg-137 is a binding site for ATP. Arg-156 contacts substrate.

The protein belongs to the shikimate kinase family. Monomer. Requires Mg(2+) as cofactor.

The protein resides in the cytoplasm. It catalyses the reaction shikimate + ATP = 3-phosphoshikimate + ADP + H(+). Its pathway is metabolic intermediate biosynthesis; chorismate biosynthesis; chorismate from D-erythrose 4-phosphate and phosphoenolpyruvate: step 5/7. Functionally, catalyzes the specific phosphorylation of the 3-hydroxyl group of shikimic acid using ATP as a cosubstrate. In Paramagnetospirillum magneticum (strain ATCC 700264 / AMB-1) (Magnetospirillum magneticum), this protein is Shikimate kinase.